Here is a 29-residue protein sequence, read N- to C-terminus: L-serine dehydratase, beta chain (29 aa).

Belongs to the iron-sulfur dependent L-serine dehydratase family. As to quaternary structure, heterodimer of an alpha chain and a beta chain. It depends on [4Fe-4S] cluster as a cofactor.

It catalyses the reaction L-serine = pyruvate + NH4(+). It participates in carbohydrate biosynthesis; gluconeogenesis. The polypeptide is L-serine dehydratase, beta chain (Anaerotignum propionicum (Clostridium propionicum)).